Here is a 585-residue protein sequence, read N- to C-terminus: Proline--tRNA ligase (585 aa).

The protein belongs to the class-II aminoacyl-tRNA synthetase family. ProS type 1 subfamily. As to quaternary structure, homodimer.

The protein resides in the cytoplasm. It carries out the reaction tRNA(Pro) + L-proline + ATP = L-prolyl-tRNA(Pro) + AMP + diphosphate. Catalyzes the attachment of proline to tRNA(Pro) in a two-step reaction: proline is first activated by ATP to form Pro-AMP and then transferred to the acceptor end of tRNA(Pro). As ProRS can inadvertently accommodate and process non-cognate amino acids such as alanine and cysteine, to avoid such errors it has two additional distinct editing activities against alanine. One activity is designated as 'pretransfer' editing and involves the tRNA(Pro)-independent hydrolysis of activated Ala-AMP. The other activity is designated 'posttransfer' editing and involves deacylation of mischarged Ala-tRNA(Pro). The misacylated Cys-tRNA(Pro) is not edited by ProRS. This Nocardia farcinica (strain IFM 10152) protein is Proline--tRNA ligase.